The primary structure comprises 462 residues: Zinc finger CCCH domain-containing protein 34 (462 aa).

Positions 1-13 (MERYGRPGEEGSR) are enriched in basic and acidic residues. The interval 1-26 (MERYGRPGEEGSRSDPSLEWTSHGGE) is disordered. 3 consecutive C3H1-type zinc fingers follow at residues 54–82 (RPDE…HPRD), 100–128 (RMGH…HPRQ), and 148–176 (RPGE…HPVP). Positions 288-303 (TGTYQSVPSSNSTSKE) are enriched in polar residues. Residues 288–310 (TGTYQSVPSSNSTSKEFPQRPDQ) form a disordered region. 2 C3H1-type zinc fingers span residues 307–335 (RPDQ…HPVD) and 353–381 (RPGV…HSMS). Positions 405 to 418 (SSSLSGSSAPVSSS) are enriched in low complexity. The segment at 405-462 (SSSLSGSSAPVSSSNEPTKEAVTPAVSSMVSGLSRPEPAETSGDSASVSGSIEAKTSS) is disordered. The segment covering 446–462 (SGDSASVSGSIEAKTSS) has biased composition (polar residues).

It is found in the nucleus. The polypeptide is Zinc finger CCCH domain-containing protein 34 (Arabidopsis thaliana (Mouse-ear cress)).